We begin with the raw amino-acid sequence, 138 residues long: Molluscan insulin-related peptide 5 (138 aa).

Residues 1 to 31 (MAGVRLVFTKAFMVTVLLTLLLNIGVKPAEG) form the signal peptide. Q32 is modified (pyrrolidone carboxylic acid). Disulfide bonds link C48-C124, C60-C137, and C123-C128. Residues 72–84 (DAETGWLLPETMV) constitute a propeptide, C-beta peptide like. A propeptide spans 87 to 111 (NAQTDLDDPLRNIKLSSESALTYLT) (C-alpha peptide like). Q114 is modified (pyrrolidone carboxylic acid).

Belongs to the insulin family. Heterodimer of a B chain and an A chain linked by two disulfide bonds. As to expression, expressed in the cerebral light-green cells which are giant neuroendocrines cells involved in the control of growth.

It localises to the cytoplasmic vesicle. The protein resides in the secretory vesicle. The sequence is that of Molluscan insulin-related peptide 5 from Lymnaea stagnalis (Great pond snail).